A 246-amino-acid polypeptide reads, in one-letter code: MCAVPVIIPAIDLKDGKCVRLKQGRMEDDTVFSDDPVAMAARWVKEGARRLHLVDLNGAFDGIPVHKQVVHDIAKAFPKLPIQLGGGVRNMQTIEQYITAGLTYIIIGTKAVEDPDFVAEACREFAGHIIVGIDAKDGMVATHGWANVTDTKATELAKRFADVGVSSIVYTDIARDGMMQGVNVEQTVNLAREGGLPVIASGGVTDMKDIELLKPYGDCIEGIITGRAIYEGTLDLGEAQLYLDGK.

The active-site Proton acceptor is D12. Catalysis depends on D134, which acts as the Proton donor.

Belongs to the HisA/HisF family.

It localises to the cytoplasm. It carries out the reaction 1-(5-phospho-beta-D-ribosyl)-5-[(5-phospho-beta-D-ribosylamino)methylideneamino]imidazole-4-carboxamide = 5-[(5-phospho-1-deoxy-D-ribulos-1-ylimino)methylamino]-1-(5-phospho-beta-D-ribosyl)imidazole-4-carboxamide. The protein operates within amino-acid biosynthesis; L-histidine biosynthesis; L-histidine from 5-phospho-alpha-D-ribose 1-diphosphate: step 4/9. This is 1-(5-phosphoribosyl)-5-[(5-phosphoribosylamino)methylideneamino] imidazole-4-carboxamide isomerase from Psychrobacter cryohalolentis (strain ATCC BAA-1226 / DSM 17306 / VKM B-2378 / K5).